The primary structure comprises 301 residues: MKIAVLSRNPRLYSTRRLVEAGTERGHEMVVIDTLRAYMNIASHKPQIHYRGKPLEGFDAVIPRIGASVTFYGCAVLRQFEMMGVFPLNESVAIARSRDKLRSLQLLSRRGIGLPVTGFAHSPDDIPDLIDMVNGAPLVIKVLEGTQGIGVVLCETATAAESVIEAFMGLKQNIMVQEYIKEAGGADIRCFVVGDKVIAAMKRQAKPGEFRSNLHRGGSASLIKITPEERMTALRAAKVMGLAVAGVDILRSNHGPLVMEVNSSPGLEGIETTTGKNVAGIIIEHLEKNGGPNMTRTKGKG.

In terms of domain architecture, ATP-grasp spans 104 to 287 (LQLLSRRGIG…VAGIIIEHLE (184 aa)). Residues K141, 178-179 (EY), D187, and 211-213 (RSN) each bind ATP. The Mg(2+) site is built by D248, E260, and N262. Residues D248, E260, and N262 each coordinate Mn(2+).

Belongs to the RimK family. Requires Mg(2+) as cofactor. The cofactor is Mn(2+).

The sequence is that of Probable alpha-L-glutamate ligase from Pseudomonas fluorescens (strain Pf0-1).